The chain runs to 477 residues: Multidrug resistance protein PmpM (477 aa).

12 helical membrane passes run 21–41 (LLTL…MGFV), 56–76 (AVAL…GTLL), 104–124 (LALL…EPIL), 133–153 (LIGP…AAAL), 171–191 (MVLG…LIYG), 202–222 (GCGW…LFWV), 253–273 (LPIG…ALLI), 286–306 (IALN…MAVT), 326–346 (GVGM…MLLL), 360–380 (VIAI…SDAL), 398–418 (MIMT…SLGL), and 431–451 (LWQG…IRLA).

This sequence belongs to the multi antimicrobial extrusion (MATE) (TC 2.A.66.1) family.

It localises to the cell inner membrane. Its function is as follows. Multidrug efflux pump that functions as an H(+)/drug antiporter. Confers resistance to benzalkonium chloride, fluoroquinolones, ethidium bromide, acriflavine and tetraphenylphosphonium chloride. The polypeptide is Multidrug resistance protein PmpM (pmpM) (Pseudomonas aeruginosa (strain ATCC 15692 / DSM 22644 / CIP 104116 / JCM 14847 / LMG 12228 / 1C / PRS 101 / PAO1)).